The sequence spans 367 residues: MAQKQQTLHQQRPFSSSPRSYSSISNRPIFLLSRNGLLLVLLALFLLLGVFLPWPGSPLLLFPNKVSSPSYASSLSPHAKSEWRNYTLAQAAKFVATNGTVIVCAVSSPFLPFLNNWLISVSRQKHQEKVLVIAEDYITLYKVNEKWPGHAVLIPPALDSKTAYSFGSQGFFNFTARRPQHLLQILELGYNVMYNDVDMVWLQDPFQYLEGSHDAYFTDDMPQIKPLNHSHDLPAPDQNGETYICSCMIYLRPTNGAKLLMKKWSEELQSQAWSESIRFKANDQPAFNLALNKTAHQVDLYLLSQVAFPTGGLYFNDAAWVKETKGKHVIVHNNYIIGYDRKMRRFQDYGLWLVDDHALESPLGKLQ.

Residues 1 to 10 (MAQKQQTLHQ) are compositionally biased toward polar residues. A disordered region spans residues 1 to 21 (MAQKQQTLHQQRPFSSSPRSY). The Cytoplasmic portion of the chain corresponds to 1–35 (MAQKQQTLHQQRPFSSSPRSYSSISNRPIFLLSRN). The segment covering 12–21 (RPFSSSPRSY) has biased composition (low complexity). Residues 36-56 (GLLLVLLALFLLLGVFLPWPG) traverse the membrane as a helical; Signal-anchor for type II membrane protein segment. Residues 57 to 367 (SPLLLFPNKV…ALESPLGKLQ (311 aa)) are Lumenal-facing. N-linked (GlcNAc...) asparagine glycans are attached at residues Asn-85, Asn-98, and Asn-173. The DXD motif signature appears at 196–198 (DVD). N-linked (GlcNAc...) asparagine glycans are attached at residues Asn-228 and Asn-292.

Belongs to the glycosyltransferase 77 family. It depends on Mn(2+) as a cofactor. Requires Mg(2+) as cofactor. In terms of processing, glycosylated. In terms of tissue distribution, expressed in roots, rosette leaves, stems and flowers.

It localises to the golgi apparatus membrane. Catalyzes the transfer of D-xylose from UDP-alpha-D-xylose onto L-fucose. Probably involved in the biosynthesis of rhamnogalacturonan II (RG-II) through xylosylation of the internal fucose moiety of the A-chain of RG-II, a structurally complex pectic polysaccharide of the primary cell wall. RG-II is essential for the cell wall integrity of rapidly growing tissues such as roots and pollen tube growth and elongation. The polypeptide is UDP-D-xylose:L-fucose alpha-1,3-D-xylosyltransferase (Arabidopsis thaliana (Mouse-ear cress)).